The primary structure comprises 309 residues: Homoserine O-succinyltransferase (309 aa).

Catalysis depends on C142, which acts as the Acyl-thioester intermediate. The substrate site is built by K163 and S192. H235 acts as the Proton acceptor in catalysis. E237 is a catalytic residue. R249 serves as a coordination point for substrate.

It belongs to the MetA family.

The protein resides in the cytoplasm. It catalyses the reaction L-homoserine + succinyl-CoA = O-succinyl-L-homoserine + CoA. It participates in amino-acid biosynthesis; L-methionine biosynthesis via de novo pathway; O-succinyl-L-homoserine from L-homoserine: step 1/1. Functionally, transfers a succinyl group from succinyl-CoA to L-homoserine, forming succinyl-L-homoserine. This is Homoserine O-succinyltransferase from Photorhabdus laumondii subsp. laumondii (strain DSM 15139 / CIP 105565 / TT01) (Photorhabdus luminescens subsp. laumondii).